A 262-amino-acid chain; its full sequence is Phosphate import ATP-binding protein PstB (262 aa).

Residues A15–I257 enclose the ABC transporter domain. An ATP-binding site is contributed by G47–S54.

Belongs to the ABC transporter superfamily. Phosphate importer (TC 3.A.1.7) family. The complex is composed of two ATP-binding proteins (PstB), two transmembrane proteins (PstC and PstA) and a solute-binding protein (PstS).

Its subcellular location is the cell inner membrane. It catalyses the reaction phosphate(out) + ATP + H2O = ADP + 2 phosphate(in) + H(+). Its function is as follows. Part of the ABC transporter complex PstSACB involved in phosphate import. Responsible for energy coupling to the transport system. This chain is Phosphate import ATP-binding protein PstB, found in Wolinella succinogenes (strain ATCC 29543 / DSM 1740 / CCUG 13145 / JCM 31913 / LMG 7466 / NCTC 11488 / FDC 602W) (Vibrio succinogenes).